Here is a 441-residue protein sequence, read N- to C-terminus: Rho-associated protein kinase 1 (441 aa).

The stretch at Asn1–Lys99 forms a coiled coil. The tract at residues Glu114–Ser353 is SHROOM3 binding. A RhoBD domain is found at Thr356–Phe422. The stretch at Asn418 to Lys441 forms a coiled coil.

This sequence belongs to the protein kinase superfamily. AGC Ser/Thr protein kinase family. Homodimer. Interacts with RHOA (activated by GTP), RHOB, RHOC, GEM, MYLC2B, RHOE, PPP1R12A, LIMK1, LIMK2, TSG101, CHORDC1, DAPK3, PFN1, PTEN and JIP3. Interacts with FHOD1 in a Src-dependent manner. Interacts with ITGB1BP1 (via N-terminus and PTB domain). Interacts with SHROOM3. It depends on Mg(2+) as a cofactor.

The protein localises to the cytoplasm. The protein resides in the golgi apparatus membrane. It localises to the cytoskeleton. Its subcellular location is the microtubule organizing center. It is found in the centrosome. The protein localises to the centriole. The protein resides in the cell projection. It localises to the bleb. Its subcellular location is the cell membrane. It is found in the lamellipodium. The protein localises to the ruffle. It catalyses the reaction L-seryl-[protein] + ATP = O-phospho-L-seryl-[protein] + ADP + H(+). It carries out the reaction L-threonyl-[protein] + ATP = O-phospho-L-threonyl-[protein] + ADP + H(+). With respect to regulation, activated by RHOA binding. Inhibited by Y-27632. In terms of biological role, protein kinase which is a key regulator of the actin cytoskeleton and cell polarity. Involved in regulation of smooth muscle contraction, actin cytoskeleton organization, stress fiber and focal adhesion formation, neurite retraction, cell adhesion and motility via phosphorylation of DAPK3, GFAP, LIMK1, LIMK2, MYL9/MLC2, TPPP, PFN1 and PPP1R12A. Phosphorylates FHOD1 and acts synergistically with it to promote SRC-dependent non-apoptotic plasma membrane blebbing. Phosphorylates JIP3 and regulates the recruitment of JNK to JIP3 upon UVB-induced stress. Acts as a suppressor of inflammatory cell migration by regulating PTEN phosphorylation and stability. Acts as a negative regulator of VEGF-induced angiogenic endothelial cell activation. Required for centrosome positioning and centrosome-dependent exit from mitosis. Plays a role in terminal erythroid differentiation. Inhibits podocyte motility via regulation of actin cytoskeletal dynamics and phosphorylation of CFL1. Promotes keratinocyte terminal differentiation. Involved in osteoblast compaction through the fibronectin fibrillogenesis cell-mediated matrix assembly process, essential for osteoblast mineralization. May regulate closure of the eyelids and ventral body wall by inducing the assembly of actomyosin bundles. This Bos taurus (Bovine) protein is Rho-associated protein kinase 1 (ROCK1).